The following is a 95-amino-acid chain: Small ubiquitin-related modifier 2-B (95 aa).

Lys-11 is covalently cross-linked (Glycyl lysine isopeptide (Lys-Gly) (interchain with G-Cter in SUMO)). The region spanning 16–95 is the Ubiquitin-like domain; that stretch reads DHINLKVAGQ…VFQQQTGGSY (80 aa). Gly-93 is covalently cross-linked (Glycyl lysine isopeptide (Gly-Lys) (interchain with K-? in acceptor proteins)). Residues 94–95 constitute a propeptide that is removed on maturation; the sequence is SY.

Belongs to the ubiquitin family. SUMO subfamily. In terms of assembly, interacts with sae2 and ube2i. Covalently attached to a number of proteins, including top2. Post-translationally, polymeric chains can be formed through Lys-11 cross-linking. In terms of processing, cleavage of precursor form by a sentrin-specific protease is necessary for function.

Its subcellular location is the nucleus. Ubiquitin-like protein that can be covalently attached to proteins as a monomer or as a lysine-linked polymer. Covalent attachment via an isopeptide bond to its substrates requires prior activation by the E1 complex sae1-sae2 and linkage to the E2 enzyme ube2i, and can be promoted by an E3 ligase such as pias1-4. This post-translational modification on lysine residues of proteins plays a crucial role in a number of cellular processes such as nuclear transport, DNA replication and repair, mitosis and signal transduction. Polymeric sumo2 chains are also susceptible to polyubiquitination which functions as a signal for proteasomal degradation of modified proteins. In Xenopus laevis (African clawed frog), this protein is Small ubiquitin-related modifier 2-B (sumo2-b).